Consider the following 173-residue polypeptide: Adenine phosphoribosyltransferase (173 aa).

This sequence belongs to the purine/pyrimidine phosphoribosyltransferase family. In terms of assembly, homodimer.

The protein localises to the cytoplasm. The catalysed reaction is AMP + diphosphate = 5-phospho-alpha-D-ribose 1-diphosphate + adenine. The protein operates within purine metabolism; AMP biosynthesis via salvage pathway; AMP from adenine: step 1/1. In terms of biological role, catalyzes a salvage reaction resulting in the formation of AMP, that is energically less costly than de novo synthesis. The polypeptide is Adenine phosphoribosyltransferase (Caldanaerobacter subterraneus subsp. tengcongensis (strain DSM 15242 / JCM 11007 / NBRC 100824 / MB4) (Thermoanaerobacter tengcongensis)).